We begin with the raw amino-acid sequence, 1763 residues long: Genome polyprotein (1763 aa).

An SF3 helicase domain is found at 458-614; it reads DGVITSCNKR…ESHKRARPGT (157 aa). 484–491 contacts ATP; the sequence is GPPGCGKT. The tract at residues 981–986 is acidic; it reads DDEYDE. Tyr984 carries the post-translational modification O-(5'-phospho-RNA)-tyrosine. Thr1040 carries the phosphothreonine modification. Ser1067 carries the post-translational modification Phosphoserine. Residues 1073–1229 enclose the Peptidase C24 domain; the sequence is GPGTKFHKNA…KLVVPYVHID (157 aa). Active-site for 3CLpro activity residues include His1110, Glu1131, and Cys1193. Positions 1478–1603 constitute a RdRp catalytic domain; it reads AKVFAVDYSK…MFPIMYASIS (126 aa).

In terms of assembly, homodimer. Interacts with NTPase, protein p30 and protease-polymerase p76. Interacts with capsid protein VP1 and protease-polymerase p76. Interacts with host IEF4e; this interaction plays a role in translation of viral proteins. As to quaternary structure, homooligomer. Interacts with Vpg, protein p32 and may interact with capsid protein VP1. Post-translationally, specific enzymatic cleavages in vivo yield mature proteins. Pro-Pol is first autocatalytically cleaved, then processes the whole polyprotein. In terms of processing, VPg is uridylylated by the polymerase and is covalently attached to the 5'-end of the polyadenylated genomic and subgenomic RNAs. This uridylylated form acts as a nucleotide-peptide primer for the polymerase.

It is found in the host endoplasmic reticulum membrane. The enzyme catalyses a ribonucleoside 5'-triphosphate + H2O = a ribonucleoside 5'-diphosphate + phosphate + H(+). The catalysed reaction is RNA(n) + a ribonucleoside 5'-triphosphate = RNA(n+1) + diphosphate. It carries out the reaction Endopeptidase with a preference for cleavage when the P1 position is occupied by Glu-|-Xaa and the P1' position is occupied by Gly-|-Yaa.. In terms of biological role, together with NTPase and NS4, initiates the formation of the replication complex. Induces the proliferation of the host smooth ER membranes forming long tubular structures. These remodeled membranes probably form the viral factories that contain the replication complex. Its function is as follows. Displays NTPase activity, but no helicase activity. Induces the formation of convoluted membranes derived from the host ER. These remodeled membranes probably form the viral factories that contain the replication complex. Together with NS2 and NS4, initiates the formation of the replication complex. Functionally, probable key protein responsible for the formation of membrane alterations by the virus. Induces the formation of convoluted membranes derived from the host ER. These remodeled membranes probably form the viral factories that contain the replication complex. Together with NS2 and NTPase, initiates the formation of the replication complex. Viral genome-linked protein is covalently linked to the 5'-end of the positive-strand, negative-strand genomic RNAs and subgenomic RNA. Acts as a genome-linked replication primer. May recruit ribosome to viral RNA thereby promoting viral proteins translation. Interacts with host translation initiation complex to allow the translation of viral proteins. In terms of biological role, protease-polymerase p76 processes the polyprotein: Pro-Pol is first released by autocleavage, then all other proteins are cleaved. Cleaves host translation initiation factor eIF4G1, eIF4G2 and PABP1 thereby inducing a shutdown of host protein synthesis. This shutdown may not prevent viral mRNA from being translated since viral Vpg replaces the cap. It is also an RNA-directed RNA polymerase which replicates genomic and antigenomic viral RNA by recognizing specific signals. Also transcribes a subgenomic mRNA by initiating RNA synthesis internally on antigenomic RNA. This sgRNA codes for structural proteins. Catalyzes the covalent attachment VPg with viral RNAs. Cleaves host G3BP1 thereby preventing the assembly of host stress granules. The chain is Genome polyprotein from Felidae (cat family).